The sequence spans 396 residues: Gap junction gamma-1 protein (396 aa).

Topologically, residues 1 to 22 are cytoplasmic; that stretch reads MSWSFLTRLLEEIHNHSTFVGK. A helical transmembrane segment spans residues 23–45; the sequence is IWLTVLIVFRIVLTAVGGESIYY. The Extracellular segment spans residues 46–75; the sequence is DEQSKFVCNTEQPGCENVCYDAFAPLSHVR. Residues 76–95 form a helical membrane-spanning segment; it reads FWVFQIILVATPSVMYLGYA. Residues 96-175 lie on the Cytoplasmic side of the membrane; that stretch reads IHKIAKMEHG…RRIREDGLMK (80 aa). The disordered stretch occupies residues 146–165; that stretch reads LESEKENKDQNQSKPKHDGR. Positions 147–156 are enriched in basic and acidic residues; the sequence is ESEKENKDQN. Residues 176 to 198 traverse the membrane as a helical segment; it reads IYVLQLLARTVFEVGFLVGQYFL. Residues 199–228 lie on the Extracellular side of the membrane; sequence YGFQVHPFYVCSRLPCPHKIDCFISRPTEK. A helical transmembrane segment spans residues 229-248; that stretch reads TIFLLIMYGVTGLCLLLNIW. Over 249-396 the chain is Cytoplasmic; that stretch reads EMLHLGFGTI…SGDGKTSVWI (148 aa). Residues 356–396 form a disordered region; the sequence is YNHQNNPHGSREKKAKVGSKAGSNKSSASSKSGDGKTSVWI. Over residues 373–396 the composition is skewed to low complexity; that stretch reads GSKAGSNKSSASSKSGDGKTSVWI.

It belongs to the connexin family. Gamma-type subfamily. In terms of assembly, a connexon is composed of a hexamer of connexins. Interacts with CNST.

It is found in the cell membrane. The protein resides in the cell junction. The protein localises to the gap junction. Functionally, one gap junction consists of a cluster of closely packed pairs of transmembrane channels, the connexons, through which materials of low MW diffuse from one cell to a neighboring cell. This chain is Gap junction gamma-1 protein (GJC1), found in Bos taurus (Bovine).